The primary structure comprises 82 residues: Escargot/snail protein homolog (82 aa).

4 C2H2-type zinc fingers span residues 1-5 (HQQFH), 18-40 (FSCKNCDKTYVSLGALKMHIRTH), 44-66 (CKCPICGKAFSRPWLLQGHIRTH), and 72-82 (FSCQHCQSAFV).

This sequence belongs to the snail C2H2-type zinc-finger protein family.

The protein resides in the nucleus. This Calliphora vicina (Blue blowfly) protein is Escargot/snail protein homolog.